The sequence spans 566 residues: Liver carboxylesterase (566 aa).

An N-terminal signal peptide occupies residues 1 to 18; it reads MWLLPLVLTSLASSATWA. Asn-80 carries an N-linked (GlcNAc...) asparagine glycan. A disulfide bridge connects residues Cys-88 and Cys-117. The Acyl-ester intermediate role is filled by Ser-222. Cys-274 and Cys-285 are disulfide-bonded. The active-site Charge relay system is the Glu-354. The residue at position 379 (Ser-379) is a Phosphoserine. Catalysis depends on His-467, which acts as the Charge relay system. Positions 563–566 match the Prevents secretion from ER motif; that stretch reads HAEL.

The protein belongs to the type-B carboxylesterase/lipase family.

It is found in the endoplasmic reticulum lumen. It carries out the reaction a carboxylic ester + H2O = an alcohol + a carboxylate + H(+). With respect to regulation, activated by CHAPS at concentrations of up to 130 mM, higher concentrations reduce activity. In the presence of CHAPS, activity is stimulated by non-ionic detergents. Inhibited by the esterase inhibitors diisopropylfluorophosphate and phenylmethylsulfonyl fluoride. Its function is as follows. Involved in the detoxification of xenobiotics and in the activation of ester and amide prodrugs. Active towards triacylglycerides containing short-chain fatty acids from C2 to C6, and 1(3)-monoacylglycerols containing fatty acids from C2 to C12. Inactive on long-chain triacylglycerols and diacylglycerol. Hydrolyzes aromatic and alkyl esters and vitamin A acetate. The hydrolysis rate depends upon the amino acid promoiety and the esterification site of the prodrug. Aromatic promoieties are favored, highest rates are observed with phenylalanyl progdrugs, hydrolysis of valyl and isoleucyl prodrugs is less efficient. With floxuridine prodrugs, activity is higher on 5' monoesters than on 3' monoesters. With gemcitabine prodrugs, activity is higher on 3' monoesters than on 5' monoesters. This Sus scrofa (Pig) protein is Liver carboxylesterase.